Reading from the N-terminus, the 186-residue chain is Putative 5'(3')-deoxyribonucleotidase (186 aa).

Asp-6 functions as the Nucleophile in the catalytic mechanism. Positions 6, 8, and 137 each coordinate Mg(2+). The active-site Proton donor is the Asp-8.

It belongs to the 5'(3')-deoxyribonucleotidase family. Mg(2+) serves as cofactor.

Dephosphorylates the 5' and 2'(3')-phosphates of deoxyribonucleotides. This is Putative 5'(3')-deoxyribonucleotidase from Bordetella pertussis (strain Tohama I / ATCC BAA-589 / NCTC 13251).